The sequence spans 289 residues: Protease HtpX homolog (289 aa).

Helical transmembrane passes span Ala11 to Gly31 and Ala36 to Trp54. His138 is a binding site for Zn(2+). Glu139 is an active-site residue. Residue His142 coordinates Zn(2+). The next 2 helical transmembrane spans lie at Val153–Gly173 and Leu182–Ile202. Residue Glu207 coordinates Zn(2+).

Belongs to the peptidase M48B family. Zn(2+) serves as cofactor.

The protein resides in the cell membrane. This Pseudarthrobacter chlorophenolicus (strain ATCC 700700 / DSM 12829 / CIP 107037 / JCM 12360 / KCTC 9906 / NCIMB 13794 / A6) (Arthrobacter chlorophenolicus) protein is Protease HtpX homolog.